A 266-amino-acid polypeptide reads, in one-letter code: tRNA pseudouridine synthase A (266 aa).

Asp-52 functions as the Nucleophile in the catalytic mechanism. Tyr-113 lines the substrate pocket.

It belongs to the tRNA pseudouridine synthase TruA family. In terms of assembly, homodimer.

The enzyme catalyses uridine(38/39/40) in tRNA = pseudouridine(38/39/40) in tRNA. Functionally, formation of pseudouridine at positions 38, 39 and 40 in the anticodon stem and loop of transfer RNAs. The sequence is that of tRNA pseudouridine synthase A from Agrobacterium fabrum (strain C58 / ATCC 33970) (Agrobacterium tumefaciens (strain C58)).